A 198-amino-acid polypeptide reads, in one-letter code: Protein hunchback (198 aa).

Disordered stretches follow at residues 16–116 and 158–198; these read SHHH…NPMQ and LTPP…KYMA. Residues 17-31 show a composition bias toward basic residues; sequence HHHHHHHAHHSHHQH. Low complexity-rich tracts occupy residues 35 to 46 and 68 to 83; these read SNSNSNASSPHQ and QQQQ…QQQQ. Residues 95–105 show a composition bias toward polar residues; sequence PSPSNNDQNSP. Residues 179–198 show a composition bias toward basic and acidic residues; the sequence is EPEKEHDLMSNSSEDMKYMA.

This sequence belongs to the hunchback C2H2-type zinc-finger protein family.

The protein resides in the nucleus. In terms of biological role, gap class segmentation protein that controls development of head structures. The chain is Protein hunchback (hb) from Drosophila cyrtoloma (Fruit fly).